The following is a 477-amino-acid chain: Argininosuccinate lyase (477 aa).

Belongs to the lyase 1 family. Argininosuccinate lyase subfamily.

It is found in the cytoplasm. The catalysed reaction is 2-(N(omega)-L-arginino)succinate = fumarate + L-arginine. It functions in the pathway amino-acid biosynthesis; L-arginine biosynthesis; L-arginine from L-ornithine and carbamoyl phosphate: step 3/3. The chain is Argininosuccinate lyase from Corynebacterium glutamicum (strain R).